The chain runs to 559 residues: Formate--tetrahydrofolate ligase (559 aa).

68-75 provides a ligand contact to ATP; sequence TPAGEGKT.

The protein belongs to the formate--tetrahydrofolate ligase family. Homotetramer.

The catalysed reaction is (6S)-5,6,7,8-tetrahydrofolate + formate + ATP = (6R)-10-formyltetrahydrofolate + ADP + phosphate. It functions in the pathway one-carbon metabolism; tetrahydrofolate interconversion. The sequence is that of Formate--tetrahydrofolate ligase from Moorella thermoacetica (Clostridium thermoaceticum).